Reading from the N-terminus, the 263-residue chain is Methylesterase 1 (263 aa).

Serine 85 functions as the Acyl-ester intermediate in the catalytic mechanism. Residues aspartate 213 and histidine 241 each act as charge relay system in the active site.

It belongs to the AB hydrolase superfamily. Methylesterase family.

It carries out the reaction methyl (indol-3-yl)acetate + H2O = (indol-3-yl)acetate + methanol + H(+). The catalysed reaction is methyl (-)-jasmonate + H2O = jasmonate + methanol + H(+). It catalyses the reaction methyl salicylate + H2O = salicylate + methanol + H(+). Its pathway is plant hormone biosynthesis. The protein operates within lipid metabolism; oxylipin biosynthesis. Its activity is regulated as follows. Esterase activity is down-regulated by salicylic acid (SA). Functionally, methylesterase shown to have carboxylesterase activity, methyl indole-3-acetic acid (MeIAA) esterase activity, methyl salicylate (MeSA) esterase activity and methyl jasmonate (MeJA) esterase activity in vitro. Required to convert methyl salicylate (MeSA) to salicylic acid (SA) as part of the signal transduction pathways that activate systemic acquired resistance in systemic tissue. MeSA is believed to be an inactive form that needs to be demethylated to exert a biological effect. This chain is Methylesterase 1, found in Arabidopsis thaliana (Mouse-ear cress).